A 177-amino-acid chain; its full sequence is Meiotically up-regulated gene 121 protein (177 aa).

The N-terminal stretch at 1 to 23 (MKGFVVISRFILTLFILITPGLA) is a signal peptide. Asn121 is a glycosylation site (N-linked (GlcNAc...) asparagine).

It localises to the endoplasmic reticulum. Its subcellular location is the golgi apparatus. Functionally, has a role in meiosis. The chain is Meiotically up-regulated gene 121 protein (mug121) from Schizosaccharomyces pombe (strain 972 / ATCC 24843) (Fission yeast).